A 148-amino-acid polypeptide reads, in one-letter code: Arginine repressor (148 aa).

It belongs to the ArgR family.

Its subcellular location is the cytoplasm. The protein operates within amino-acid biosynthesis; L-arginine biosynthesis [regulation]. Regulates arginine biosynthesis genes. The polypeptide is Arginine repressor (Chloroherpeton thalassium (strain ATCC 35110 / GB-78)).